We begin with the raw amino-acid sequence, 342 residues long: Uroporphyrinogen decarboxylase (342 aa).

Substrate-binding positions include R22–R26, F41, D72, Y146, S201, and H317.

This sequence belongs to the uroporphyrinogen decarboxylase family. Homodimer.

Its subcellular location is the cytoplasm. It catalyses the reaction uroporphyrinogen III + 4 H(+) = coproporphyrinogen III + 4 CO2. Its pathway is porphyrin-containing compound metabolism; protoporphyrin-IX biosynthesis; coproporphyrinogen-III from 5-aminolevulinate: step 4/4. Its function is as follows. Catalyzes the decarboxylation of four acetate groups of uroporphyrinogen-III to yield coproporphyrinogen-III. This Orientia tsutsugamushi (strain Boryong) (Rickettsia tsutsugamushi) protein is Uroporphyrinogen decarboxylase.